We begin with the raw amino-acid sequence, 1163 residues long: Reticulon-4 (1163 aa).

At Met1 the chain carries N-acetylmethionine. 2 disordered regions span residues 1–184 and 244–270; these read MEDI…AASE and SAVSSSEGTIEETLNEASKELPERATN. The Cytoplasmic portion of the chain corresponds to 1-989; the sequence is MEDIDQSSLV…LYWRDIKKTG (989 aa). Phosphoserine occurs at positions 7 and 16. Positions 7–16 are enriched in low complexity; sequence SSLVSSSTDS. Over residues 31–55 the composition is skewed to acidic residues; it reads EPEDEEDEEEEEDEEEDDEDLEELE. The segment covering 62–79 has biased composition (low complexity); that stretch reads AAGLSAAAVPPAAAAPLL. Over residues 87-101 the composition is skewed to pro residues; that stretch reads PPAPRGPLPAAPPAA. The residue at position 107 (Ser107) is a Phosphoserine. Residues 138–147 are compositionally biased toward pro residues; that stretch reads ARPPPPPPAG. 3 positions are modified to phosphoserine: Ser149, Ser169, and Ser171. Phosphoserine occurs at positions 329, 333, and 343. Residue Thr347 is modified to Phosphothreonine. The segment covering 406-423 has biased composition (basic and acidic residues); that stretch reads DSLEQKSLGKDSEGRNED. Disordered regions lie at residues 406-437 and 454-474; these read DSLEQKSLGKDSEGRNEDASFPSTPEPVKDSS and TANTFPLLEDHTSENKTDEKK. Ser425 is subject to Phosphoserine. Residue Thr429 is modified to Phosphothreonine. Residues 461-474 are compositionally biased toward basic and acidic residues; that stretch reads LEDHTSENKTDEKK. Residues Ser488, Ser689, Ser726, Ser766, and Ser830 each carry the phosphoserine modification. Residue Thr832 is modified to Phosphothreonine. Ser855, Ser922, and Ser962 each carry phosphoserine. Residues 976–1163 enclose the Reticulon domain; it reads VVDLLYWRDI…KIPGLKRKAD (188 aa). A helical membrane pass occupies residues 990–1010; it reads VVFGASLFLLLSLTVFSIVSV. Residues 1011–1104 lie on the Lumenal side of the membrane; it reads TAYIALALLS…LMWVFTYVGA (94 aa). The residue at position 1075 (Lys1075) is an N6-acetyllysine. The helical transmembrane segment at 1105–1125 threads the bilayer; the sequence is LFNGLTLLILALISLFSIPVI. The Cytoplasmic segment spans residues 1126–1163; it reads YERHQVQIDHYLGLANKSVKDAMAKIQAKIPGLKRKAD.

In terms of assembly, binds to RTN4R. Interacts with ATL1. Interacts with TMEM170A. Interacts with RTN4IP1. Interacts in trans with CNTNAP1. Interacts with REEP5. Interacts with synaptic plasticity regulator PANTS; the interaction results in enhanced RTN4-mediated inhibition of AMPA receptor clustering. Interacts with GPR50. As to quaternary structure, homodimer. Interacts with BAD/Bcl-xl and BCL2. Interact with RTN3. Interacts with NGBR. Interacts with SPTLC1. Interacts with GRAMD4. Interacts with CDH5. Interacts with BACE1 and BACE2. Interacts with REEP5. Interacts with RETREG3. In terms of assembly, interacts with BACE1 and BACE2. Interacts with TMEM33. Isoforms A, B and C are present in optic nerve, spinal cord and cerebral cortex. Isoforms A and B are present in dorsal root ganglion, sciatic nerve and PC12 cells after longer exposure. Isoforms B and C are detected in kidney, cartilage, skin, lung and spleen. Isoform C is expressed at high level in skeletal muscle. In adult animals isoform A is expressed mainly in the nervous system.

It localises to the endoplasmic reticulum membrane. It is found in the cell membrane. The protein resides in the synapse. The protein localises to the cell junction. In terms of biological role, required to induce the formation and stabilization of endoplasmic reticulum (ER) tubules. They regulate membrane morphogenesis in the ER by promoting tubular ER production. They influence nuclear envelope expansion, nuclear pore complex formation and proper localization of inner nuclear membrane proteins. However each isoform have specific functions mainly depending on their tissue expression specificities. Developmental neurite growth regulatory factor with a role as a negative regulator of axon-axon adhesion and growth, and as a facilitator of neurite branching. Regulates neurite fasciculation, branching and extension in the developing nervous system. Involved in down-regulation of growth, stabilization of wiring and restriction of plasticity in the adult CNS. Regulates the radial migration of cortical neurons via an RTN4R-LINGO1 containing receptor complex. Acts as a negative regulator of central nervous system angiogenesis. Inhibits spreading, migration and sprouting of primary brain microvascular endothelial cells (MVECs). Also induces the retraction of MVECs lamellipodia and filopodia in a ROCK pathway-dependent manner. Functionally, mainly function in endothelial cells and vascular smooth muscle cells, is also involved in immune system regulation. Modulator of vascular remodeling, promotes the migration of endothelial cells but inhibits the migration of vascular smooth muscle cells. Regulates endothelial sphingolipid biosynthesis with direct effects on vascular function and blood pressure. Inhibits serine palmitoyltransferase, SPTLC1, the rate-limiting enzyme of the novo sphingolipid biosynthetic pathway, thereby controlling production of endothelial sphingosine-1-phosphate (S1P). Required to promote macrophage homing and functions such as cytokine/chemokine gene expression involved in angiogenesis, arteriogenesis and tissue repair. Mediates ICAM1 induced transendothelial migration of leukocytes such as monocytes and neutrophils and acute inflammation. Necessary for immune responses triggered by nucleic acid sensing TLRs, such as TLR9, is required for proper TLR9 location to endolysosomes. Also involved in immune response to LPS. Plays a role in liver regeneration through the modulation of hepatocytes proliferation. Reduces the anti-apoptotic activity of Bcl-xl and Bcl-2. This is likely consecutive to their change in subcellular location, from the mitochondria to the endoplasmic reticulum, after binding and sequestration. With isoform C, inhibits BACE1 activity and amyloid precursor protein processing. Its function is as follows. Regulates cardiomyocyte apoptosis upon hypoxic conditions. With isoform B, inhibits BACE1 activity and amyloid precursor protein processing. In Rattus norvegicus (Rat), this protein is Reticulon-4 (Rtn4).